We begin with the raw amino-acid sequence, 348 residues long: MNVLGIETTCDETAAAIVTAAEDGRAVIRANEVLSQIAEHAAYGGVVPEIAARAHVEVVDRLIARALQEAGLGFDDLDGIAVAAGPGLIGGVLVGLVTAKTLSLVTRKPLLAVNHLEAHALTARMTDGIAFPYLLLLASGGHTQLVAVKGVGEYVRLGTTIDDAIGEAFDKAAKLLGLAYPGGPEVERAAEGGDPERFALPRPMLGRREPNFSLSGLKTALRIEAERIAPLSGQDVADLCASFQAAVVDVVVDRVRVALRAFGDVAGHPTALVAAGGVAANAALRRALSQLAGEAGLPLVAPPLPLCGDNGAMIAWAGLERLRLGLVDDITAPARPRWPFAEPLATAG.

Fe cation contacts are provided by H115 and H119. Substrate is bound by residues 137 to 141 (LASGG), D170, G183, and N281. Position 309 (D309) interacts with Fe cation.

It belongs to the KAE1 / TsaD family. The cofactor is Fe(2+).

It localises to the cytoplasm. It catalyses the reaction L-threonylcarbamoyladenylate + adenosine(37) in tRNA = N(6)-L-threonylcarbamoyladenosine(37) in tRNA + AMP + H(+). In terms of biological role, required for the formation of a threonylcarbamoyl group on adenosine at position 37 (t(6)A37) in tRNAs that read codons beginning with adenine. Is involved in the transfer of the threonylcarbamoyl moiety of threonylcarbamoyl-AMP (TC-AMP) to the N6 group of A37, together with TsaE and TsaB. TsaD likely plays a direct catalytic role in this reaction. This chain is tRNA N6-adenosine threonylcarbamoyltransferase, found in Methylobacterium sp. (strain 4-46).